Reading from the N-terminus, the 463-residue chain is L-seryl-tRNA(Sec) selenium transferase (463 aa).

K295 is modified (N6-(pyridoxal phosphate)lysine).

This sequence belongs to the SelA family. As to quaternary structure, homodecamer; pentamer of dimers. Binds only one seryl-tRNA(Sec) per dimer. The cofactor is pyridoxal 5'-phosphate.

Its subcellular location is the cytoplasm. The catalysed reaction is L-seryl-tRNA(Sec) + selenophosphate + H(+) = L-selenocysteinyl-tRNA(Sec) + phosphate. It functions in the pathway aminoacyl-tRNA biosynthesis; selenocysteinyl-tRNA(Sec) biosynthesis; selenocysteinyl-tRNA(Sec) from L-seryl-tRNA(Sec) (bacterial route): step 1/1. In terms of biological role, converts seryl-tRNA(Sec) to selenocysteinyl-tRNA(Sec) required for selenoprotein biosynthesis. This chain is L-seryl-tRNA(Sec) selenium transferase, found in Shigella flexneri serotype 5b (strain 8401).